The sequence spans 187 residues: Peptidyl-tRNA hydrolase (187 aa).

Position 18 (tyrosine 18) interacts with tRNA. The active-site Proton acceptor is the histidine 23. Residues phenylalanine 65, asparagine 67, and asparagine 113 each coordinate tRNA.

The protein belongs to the PTH family. Monomer.

It localises to the cytoplasm. The catalysed reaction is an N-acyl-L-alpha-aminoacyl-tRNA + H2O = an N-acyl-L-amino acid + a tRNA + H(+). Its function is as follows. Hydrolyzes ribosome-free peptidyl-tRNAs (with 1 or more amino acids incorporated), which drop off the ribosome during protein synthesis, or as a result of ribosome stalling. In terms of biological role, catalyzes the release of premature peptidyl moieties from peptidyl-tRNA molecules trapped in stalled 50S ribosomal subunits, and thus maintains levels of free tRNAs and 50S ribosomes. This Coxiella burnetii (strain CbuK_Q154) (Coxiella burnetii (strain Q154)) protein is Peptidyl-tRNA hydrolase.